The following is a 37-amino-acid chain: Large ribosomal subunit protein bL36A (37 aa).

Belongs to the bacterial ribosomal protein bL36 family.

This is Large ribosomal subunit protein bL36A from Arthrobacter sp. (strain FB24).